The following is a 288-amino-acid chain: T-cell-interacting, activating receptor on myeloid cells protein 1 (288 aa).

The N-terminal stretch at 1–16 (MISRLLSLLCLRLCVG) is a signal peptide. The Extracellular portion of the chain corresponds to 17-258 (QTDIPENGSP…EGYTVDNLIR (242 aa)). Ig-like C2-type domains lie at 27-113 (PKPS…HPSN) and 124-217 (PQPS…LEIS). 2 cysteine pairs are disulfide-bonded: Cys-49–Cys-97 and Cys-146–Cys-196. N-linked (GlcNAc...) asparagine glycans are attached at residues Asn-74 and Asn-185. A helical membrane pass occupies residues 259–279 (VGVAAAILLIVGGFLVEAWHS). Residues 280 to 288 (ERLSPNKPW) are Cytoplasmic-facing.

In terms of assembly, interacts with Fc receptor gamma chain FCER1G. Post-translationally, N-glycosylated. As to expression, expressed in lung, uterus, lymph nodes, spleen, thymus and bone marrow. Expressed in bone marrow CD11b(+)Gr-1(+) granulocyte precursors and mature neutrophils.

Its subcellular location is the cell membrane. In terms of biological role, may act as receptor. Negatively regulates TCR-mediated CD4(+) T cell proliferation and activation, possibly by binding an unknown ligand on the T cell surface. Enhances Toll-like receptor-mediated production of pro-inflammatory cytokines by macrophages and neutrophils. The polypeptide is T-cell-interacting, activating receptor on myeloid cells protein 1 (Tarm1) (Mus musculus (Mouse)).